The primary structure comprises 162 residues: NADH-quinone oxidoreductase subunit I (162 aa).

2 4Fe-4S ferredoxin-type domains span residues 52–82 (LRRY…IEAG) and 93–122 (VRYD…EGPN). Residues Cys62, Cys65, Cys68, Cys72, Cys102, Cys105, Cys108, and Cys112 each coordinate [4Fe-4S] cluster.

This sequence belongs to the complex I 23 kDa subunit family. In terms of assembly, NDH-1 is composed of 14 different subunits. Subunits NuoA, H, J, K, L, M, N constitute the membrane sector of the complex. Requires [4Fe-4S] cluster as cofactor.

The protein resides in the cell inner membrane. The catalysed reaction is a quinone + NADH + 5 H(+)(in) = a quinol + NAD(+) + 4 H(+)(out). Functionally, NDH-1 shuttles electrons from NADH, via FMN and iron-sulfur (Fe-S) centers, to quinones in the respiratory chain. The immediate electron acceptor for the enzyme in this species is believed to be ubiquinone. Couples the redox reaction to proton translocation (for every two electrons transferred, four hydrogen ions are translocated across the cytoplasmic membrane), and thus conserves the redox energy in a proton gradient. This Bradyrhizobium sp. (strain ORS 278) protein is NADH-quinone oxidoreductase subunit I.